Reading from the N-terminus, the 480-residue chain is Chromosomal replication initiator protein DnaA (480 aa).

The interval 1 to 71 (MRHDALFERV…TTLVQQEDSE (71 aa)) is domain I, interacts with DnaA modulators. The interval 71–137 (EILKVEILVR…RPVQAPLFGS (67 aa)) is domain II. The domain III, AAA+ region stretch occupies residues 138–360 (PLDQRYGFDS…GAFNQLLFRR (223 aa)). Positions 184, 186, 187, and 188 each coordinate ATP. The interval 361-480 (SFEPQLSIER…IELLKRLINE (120 aa)) is domain IV, binds dsDNA.

This sequence belongs to the DnaA family. In terms of assembly, oligomerizes as a right-handed, spiral filament on DNA at oriC.

The protein resides in the cytoplasm. Functionally, plays an essential role in the initiation and regulation of chromosomal replication. ATP-DnaA binds to the origin of replication (oriC) to initiate formation of the DNA replication initiation complex once per cell cycle. Binds the DnaA box (a 9 base pair repeat at the origin) and separates the double-stranded (ds)DNA. Forms a right-handed helical filament on oriC DNA; dsDNA binds to the exterior of the filament while single-stranded (ss)DNA is stabiized in the filament's interior. The ATP-DnaA-oriC complex binds and stabilizes one strand of the AT-rich DNA unwinding element (DUE), permitting loading of DNA polymerase. After initiation quickly degrades to an ADP-DnaA complex that is not apt for DNA replication. Binds acidic phospholipids. The chain is Chromosomal replication initiator protein DnaA from Rhizobium meliloti (strain 1021) (Ensifer meliloti).